Consider the following 361-residue polypeptide: Lactate-binding periplasmic protein TTHA0766 (361 aa).

Residues 1-22 (MKRVSRRAFLRRLGVGVAATAA) constitute a signal peptide (tat-type signal). Substrate is bound by residues Tyr-101, Asn-158, and Arg-178. A Ca(2+)-binding site is contributed by Asn-158. Positions 216, 217, and 247 each coordinate Ca(2+). Residues Phe-217 and 247-250 (QPVD) each bind substrate.

This sequence belongs to the bacterial solute-binding protein 7 family. In terms of assembly, homodimer. The complex comprises the extracytoplasmic solute receptor protein TTHA0766, and the two putative transmembrane proteins TTHA0767 and TTHA0768.

It is found in the periplasm. Functionally, part of the tripartite ATP-independent periplasmic (TRAP) transport system involved in the uptake of lactate. This protein specifically binds L-lactate. This Thermus thermophilus (strain ATCC 27634 / DSM 579 / HB8) protein is Lactate-binding periplasmic protein TTHA0766.